An 81-amino-acid chain; its full sequence is Photosystem I iron-sulfur center (81 aa).

4Fe-4S ferredoxin-type domains lie at 2–31 (SHTV…MVPW) and 39–68 (IASS…IRVY). The [4Fe-4S] cluster site is built by cysteine 11, cysteine 14, cysteine 17, cysteine 21, cysteine 48, cysteine 51, cysteine 54, and cysteine 58.

As to quaternary structure, the cyanobacterial PSI reaction center is composed of one copy each of PsaA,B,C,D,E,F,I,J,K,L,M and X, and forms trimeric complexes. [4Fe-4S] cluster is required as a cofactor.

The protein localises to the cellular thylakoid membrane. The enzyme catalyses reduced [plastocyanin] + hnu + oxidized [2Fe-2S]-[ferredoxin] = oxidized [plastocyanin] + reduced [2Fe-2S]-[ferredoxin]. Its function is as follows. Apoprotein for the two 4Fe-4S centers FA and FB of photosystem I (PSI); essential for photochemical activity. FB is the terminal electron acceptor of PSI, donating electrons to ferredoxin. The C-terminus interacts with PsaA/B/D and helps assemble the protein into the PSI complex. Required for binding of PsaD and PsaE to PSI. PSI is a plastocyanin/cytochrome c6-ferredoxin oxidoreductase, converting photonic excitation into a charge separation, which transfers an electron from the donor P700 chlorophyll pair to the spectroscopically characterized acceptors A0, A1, FX, FA and FB in turn. This Mastigocladus laminosus (Fischerella sp.) protein is Photosystem I iron-sulfur center.